The following is a 280-amino-acid chain: Phosphonates import ATP-binding protein PhnC (280 aa).

Residues 4 to 239 (ITVTNLHKSY…VIDDIYGNIQ (236 aa)) form the ABC transporter domain. ATP is bound at residue 36–43 (GESGAGKS). The disordered stretch occupies residues 246–280 (GDDANADVAPTTSSDGGTDAAGGPDQQPASDPHLS).

Belongs to the ABC transporter superfamily. Phosphonates importer (TC 3.A.1.9.1) family. The complex is composed of two ATP-binding proteins (PhnC), two transmembrane proteins (PhnE) and a solute-binding protein (PhnD).

The protein localises to the cell membrane. The catalysed reaction is phosphonate(out) + ATP + H2O = phosphonate(in) + ADP + phosphate + H(+). Part of the ABC transporter complex PhnCDE involved in phosphonates import. Responsible for energy coupling to the transport system. The chain is Phosphonates import ATP-binding protein PhnC from Halobacterium salinarum (strain ATCC 700922 / JCM 11081 / NRC-1) (Halobacterium halobium).